We begin with the raw amino-acid sequence, 738 residues long: Sporulation kinase E (738 aa).

4 consecutive PAS domains span residues 29–99 (ELNQ…FKKG), 150–220 (NEQL…NRKG), 271–342 (SEER…YGEI), and 391–462 (SELK…FDEM). The Histidine kinase domain maps to 523 to 729 (GIAHEIRNPM…VFHITLPVRQ (207 aa)). Residue H526 is modified to Phosphohistidine; by autocatalysis.

The catalysed reaction is ATP + protein L-histidine = ADP + protein N-phospho-L-histidine.. In terms of biological role, phosphorylates the sporulation-regulatory protein spo0A under biofilm growth conditions. Also able to weakly phosphorylate spo0F. In Bacillus subtilis (strain 168), this protein is Sporulation kinase E (kinE).